A 155-amino-acid polypeptide reads, in one-letter code: 6,7-dimethyl-8-ribityllumazine synthase (155 aa).

5-amino-6-(D-ribitylamino)uracil is bound by residues F23, 57–59 (AFE), and 81–83 (AVI). 86–87 (ST) serves as a coordination point for (2S)-2-hydroxy-3-oxobutyl phosphate. The Proton donor role is filled by H89. F114 contributes to the 5-amino-6-(D-ribitylamino)uracil binding site. (2S)-2-hydroxy-3-oxobutyl phosphate is bound at residue R128.

It belongs to the DMRL synthase family.

The catalysed reaction is (2S)-2-hydroxy-3-oxobutyl phosphate + 5-amino-6-(D-ribitylamino)uracil = 6,7-dimethyl-8-(1-D-ribityl)lumazine + phosphate + 2 H2O + H(+). It functions in the pathway cofactor biosynthesis; riboflavin biosynthesis; riboflavin from 2-hydroxy-3-oxobutyl phosphate and 5-amino-6-(D-ribitylamino)uracil: step 1/2. In terms of biological role, catalyzes the formation of 6,7-dimethyl-8-ribityllumazine by condensation of 5-amino-6-(D-ribitylamino)uracil with 3,4-dihydroxy-2-butanone 4-phosphate. This is the penultimate step in the biosynthesis of riboflavin. In Trichlorobacter lovleyi (strain ATCC BAA-1151 / DSM 17278 / SZ) (Geobacter lovleyi), this protein is 6,7-dimethyl-8-ribityllumazine synthase.